Consider the following 492-residue polypeptide: Probable cobyric acid synthase (492 aa).

One can recognise a GATase cobBQ-type domain in the interval 252-444; sequence PIEVNIVKFS…FHGILENFEF (193 aa). Cys330 (nucleophile) is an active-site residue. Residue His436 is part of the active site.

Belongs to the CobB/CobQ family. CobQ subfamily.

The protein operates within cofactor biosynthesis; adenosylcobalamin biosynthesis. Its function is as follows. Catalyzes amidations at positions B, D, E, and G on adenosylcobyrinic A,C-diamide. NH(2) groups are provided by glutamine, and one molecule of ATP is hydrogenolyzed for each amidation. This chain is Probable cobyric acid synthase, found in Methanococcus maripaludis (strain C7 / ATCC BAA-1331).